We begin with the raw amino-acid sequence, 366 residues long: Aminomethyltransferase (366 aa).

The protein belongs to the GcvT family. As to quaternary structure, the glycine cleavage system is composed of four proteins: P, T, L and H.

It catalyses the reaction N(6)-[(R)-S(8)-aminomethyldihydrolipoyl]-L-lysyl-[protein] + (6S)-5,6,7,8-tetrahydrofolate = N(6)-[(R)-dihydrolipoyl]-L-lysyl-[protein] + (6R)-5,10-methylene-5,6,7,8-tetrahydrofolate + NH4(+). The glycine cleavage system catalyzes the degradation of glycine. The sequence is that of Aminomethyltransferase from Bacillus anthracis (strain A0248).